A 153-amino-acid polypeptide reads, in one-letter code: Transcriptional repressor NrdR 2 (153 aa).

A zinc finger spans residues cysteine 3–cysteine 34. An ATP-cone domain is found at leucine 49–aspartate 139.

The protein belongs to the NrdR family. Zn(2+) serves as cofactor.

Negatively regulates transcription of bacterial ribonucleotide reductase nrd genes and operons by binding to NrdR-boxes. In Paramagnetospirillum magneticum (strain ATCC 700264 / AMB-1) (Magnetospirillum magneticum), this protein is Transcriptional repressor NrdR 2.